We begin with the raw amino-acid sequence, 1553 residues long: Dual oxidase 1 (1553 aa).

The signal sequence occupies residues 1–21 (MGFRLALAWTLLVGPWMPMGA). Residues 22–596 (RNSISWEVQR…YFKGSGFGFG (575 aa)) lie on the Extracellular side of the membrane. Positions 26-593 (SWEVQRFDGW…MRDYFKGSGF (568 aa)) are peroxidase-like; mediates peroxidase activity. N-linked (GlcNAc...) asparagine glycosylation is found at Asn-94, Asn-342, Asn-354, and Asn-534. The helical transmembrane segment at 597–617 (VTIGTLCCFPLVSLLSAWIVA) threads the bilayer. The Cytoplasmic segment spans residues 618–1046 (QLRRRNFKRL…KRFVENYRRH (429 aa)). EF-hand domains follow at residues 815 to 850 (PQDMFVESMFSLADKDGNGYLSFREFLDILVVFMKG), 851 to 886 (SPEEKSRLMFRMYDFDGNGLISKDEFIRMLRSFIEI), and 895 to 930 (QLTEVVESMFREAGFQDKQELTWEDFHFMLRDHDSE). The Ca(2+) site is built by Asp-828, Asp-830, Asn-832, Tyr-834, Glu-839, Asp-864, Asp-866, Asn-868, and Glu-875. The tract at residues 956–1250 (YISQEKLCPS…GSFALIQLPR (295 aa)) is interaction with TXNDC11. Residues 1047 to 1067 (IGCLAVFYTIAGGLFLERAYY) traverse the membrane as a helical segment. Over 1068 to 1082 (YAFAAHHMGITDTTR) the chain is Extracellular. Residues 1083-1103 (VGIILSRGTAASISFMFSYIL) traverse the membrane as a helical segment. The Ferric oxidoreductase domain maps to 1089–1271 (RGTAASISFM…YVGDKLVSLS (183 aa)). The Cytoplasmic segment spans residues 1104-1138 (LTMCRNLITFLRETFLNRYVPFDAAVDFHRLIAST). The helical transmembrane segment at 1139–1159 (AIILTVLHSAGHVVNVYLFSI) threads the bilayer. The Extracellular portion of the chain corresponds to 1160 to 1190 (SPLSVLSCLFPGLFHDNGSEFPQKYYWWFFQ). Residues 1191-1211 (TVPGLTGVMLLLILAIMYVFA) form a helical membrane-spanning segment. Residues 1212–1228 (SHHFRRCSFRGFWLTHH) lie on the Cytoplasmic side of the membrane. The chain crosses the membrane as a helical span at residues 1229–1249 (LYILLYMLLIIHGSFALIQLP). Residue Arg-1250 is a topological domain, extracellular. A helical transmembrane segment spans residues 1251 to 1271 (FHIFFLVPALIYVGDKLVSLS). The FAD-binding FR-type domain occupies 1272–1378 (RKKVEISVVK…DGPFGEGHQE (107 aa)). Residues 1272-1553 (RKKVEISVVK…THFSHHYENF (282 aa)) are Cytoplasmic-facing.

In the N-terminal section; belongs to the peroxidase family. In terms of assembly, interacts with TXNDC11, TPO and CYBA. N-glycosylated. As to expression, specifically expressed in thyroid.

It localises to the apical cell membrane. It catalyses the reaction NADH + O2 + H(+) = H2O2 + NAD(+). The catalysed reaction is NADPH + O2 + H(+) = H2O2 + NADP(+). The protein operates within hormone biosynthesis; thyroid hormone biosynthesis. Its activity is regulated as follows. The NADPH oxidase activity is calcium-dependent. Peroxidase activity is inhibited by aminobenzohydrazide. Its function is as follows. Generates hydrogen peroxide which is required for the activity of thyroid peroxidase/TPO and lactoperoxidase/LPO. Plays a role in thyroid hormones synthesis and lactoperoxidase-mediated antimicrobial defense at the surface of mucosa. May have its own peroxidase activity through its N-terminal peroxidase-like domain. This Sus scrofa (Pig) protein is Dual oxidase 1 (DUOX1).